The primary structure comprises 149 residues: Protegrin-1 (149 aa).

A signal peptide spans 1–29 (METQRASLCLGRWSLWLLLLALVVPSASA). Positions 30-130 (QALSYREAVL…DITCNEVQGV (101 aa)) are excised as a propeptide. The interval 61-80 (DQPPKADEDPGTPKPVSFTV) is disordered. Disulfide bonds link cysteine 85–cysteine 96, cysteine 107–cysteine 124, cysteine 136–cysteine 145, and cysteine 138–cysteine 143. Arginine 148 is modified (arginine amide).

This sequence belongs to the cathelicidin family.

It localises to the secreted. Functionally, microbicidal activity. Active against E.coli, Listeria monocytogenes and C.albicans, in vitro. The polypeptide is Protegrin-1 (NPG1) (Sus scrofa (Pig)).